The primary structure comprises 207 residues: Ras-related protein Rab-7a (207 aa).

Threonine 2 is modified (N-acetylthreonine). Residues serine 17, glycine 18, valine 19, glycine 20, lysine 21, threonine 22, serine 23, serine 34, asparagine 35, tyrosine 37, and threonine 40 each contribute to the GTP site. Residue threonine 22 participates in Mg(2+) binding. Residues 28–41 (YVNKKFSNQYKATI) carry the Switch 1 motif. Mg(2+) is bound by residues threonine 40 and aspartate 63. Glycine 66 is a binding site for GTP. Residues 67 to 82 (QERFQSLGVAFYRGAD) carry the Switch 2 motif. Serine 72 carries the post-translational modification Phosphoserine. The GTP site is built by asparagine 125, lysine 126, aspartate 128, alanine 156, and lysine 157. Residues lysine 191 and lysine 194 each participate in a glycyl lysine isopeptide (Lys-Gly) (interchain with G-Cter in ubiquitin) cross-link. Residues cysteine 205 and cysteine 207 are each lipidated (S-geranylgeranyl cysteine). Cysteine methyl ester is present on cysteine 207.

It belongs to the small GTPase superfamily. Rab family. In terms of assembly, interacts with NTRK1/TRKA. Interacts with RILP. Interacts with PSMA7. Interacts with RNF115. Interacts with FYCO1. Interacts with the PIK3C3/VPS34-PIK3R4 complex. The GTP-bound form interacts with OSBPL1A. The GTP-bound form interacts with RAC1. Interacts with CLN3. Interacts with CHM, the substrate-binding subunit of the Rab geranylgeranyltransferase complex. Interacts with C9orf72. Does not interact with HPS4 and the BLOC-3 complex (heterodimer of HPS1 and HPS4). Interacts with CLN5. Interacts with PLEKHM1 (via N- and C-terminus). Interacts with PRPH; the interaction is direct. Interacts with VPS13A. The GDP-bound form interacts with RIMOC1. Interacts with the MON1A-CCZ1B complex and this interaction is enhanced in the presence of RIMOC1. Interacts with VPS39 and VPS41. Forms a ternary complex with LAMP2 and RUFY4; the interaction with LAMP2 is mediated by RUFY4 (via RUN and coiled coil domains). Requires Mg(2+) as cofactor. In terms of processing, deubiquitination at Lys-191 and Lys-194 by USP32. Phosphorylated at Ser-72 by LRRK1; phosphorylation is dependent on protein kinase C (PKC) activation of LRRK1. Post-translationally, prenylated. Prenylation is required for association with cellular membranes.

The protein localises to the cytoplasmic vesicle. The protein resides in the phagosome membrane. It localises to the late endosome membrane. Its subcellular location is the lysosome membrane. It is found in the melanosome membrane. The protein localises to the autophagosome membrane. The protein resides in the lipid droplet. It localises to the endosome membrane. Its subcellular location is the mitochondrion membrane. The catalysed reaction is GTP + H2O = GDP + phosphate + H(+). Its activity is regulated as follows. Regulated by guanine nucleotide exchange factors (GEFs) which promote the exchange of bound GDP for free GTP. Regulated by GTPase activating proteins (GAPs) which increase the GTP hydrolysis activity. Inhibited by GDP dissociation inhibitors (GDIs). Functionally, the small GTPases Rab are key regulators of intracellular membrane trafficking, from the formation of transport vesicles to their fusion with membranes. Rabs cycle between an inactive GDP-bound form and an active GTP-bound form that is able to recruit to membranes different sets of downstream effectors directly responsible for vesicle formation, movement, tethering and fusion. In its active state, RAB7A binds to a variety of effector proteins playing a key role in the regulation of endo-lysosomal trafficking. Governs early-to-late endosomal maturation, microtubule minus-end as well as plus-end directed endosomal migration and positioning, and endosome-lysosome transport through different protein-protein interaction cascades. Also plays a central role in growth-factor-mediated cell signaling, nutrient-transporter-mediated nutrient uptake, neurotrophin transport in the axons of neurons and lipid metabolism. Also involved in regulation of some specialized endosomal membrane trafficking, such as maturation of melanosomes, pathogen-induced phagosomes (or vacuoles) and autophagosomes. Plays a role in the maturation and acidification of phagosomes that engulf pathogens, such as S.aureus and Mycobacteria. Plays a role in the fusion of phagosomes with lysosomes. In concert with RAC1, plays a role in regulating the formation of RBs (ruffled borders) in osteoclasts. Controls the endosomal trafficking and neurite outgrowth signaling of NTRK1/TRKA. Regulates the endocytic trafficking of the EGF-EGFR complex by regulating its lysosomal degradation. Involved in the ADRB2-stimulated lipolysis through lipophagy, a cytosolic lipase-independent autophagic pathway. Required for the exosomal release of SDCBP, CD63 and syndecan. Required for vesicular trafficking and cell surface expression of ACE2. May play a role in PRPH neuronal intermediate filament assembly. The polypeptide is Ras-related protein Rab-7a (RAB7A) (Bos taurus (Bovine)).